A 183-amino-acid chain; its full sequence is Negative modulator of initiation of replication (183 aa).

An interaction with DNA region spans residues 118–122 (RTRIY).

This sequence belongs to the SeqA family. Homodimer. Polymerizes to form helical filaments.

It localises to the cytoplasm. Its function is as follows. Negative regulator of replication initiation, which contributes to regulation of DNA replication and ensures that replication initiation occurs exactly once per chromosome per cell cycle. Binds to pairs of hemimethylated GATC sequences in the oriC region, thus preventing assembly of replication proteins and re-initiation at newly replicated origins. Repression is relieved when the region becomes fully methylated. The sequence is that of Negative modulator of initiation of replication from Proteus mirabilis (strain HI4320).